The following is a 117-amino-acid chain: Large ribosomal subunit protein uL24 (117 aa).

Residues 1–12 are compositionally biased toward polar residues; that stretch reads MSKKNSQTSPQR. The interval 1 to 20 is disordered; that stretch reads MSKKNSQTSPQRQKMHVKKG.

The protein belongs to the universal ribosomal protein uL24 family. As to quaternary structure, part of the 50S ribosomal subunit.

One of two assembly initiator proteins, it binds directly to the 5'-end of the 23S rRNA, where it nucleates assembly of the 50S subunit. Functionally, one of the proteins that surrounds the polypeptide exit tunnel on the outside of the subunit. In Microcystis aeruginosa (strain NIES-843 / IAM M-2473), this protein is Large ribosomal subunit protein uL24.